A 224-amino-acid polypeptide reads, in one-letter code: uncharacterized protein (224 aa).

The 220-residue stretch at 2–221 folds into the ABC transporter domain; that stretch reads IEAKNVWKIY…KLRDGEIVEI (220 aa). Position 38–45 (38–45) interacts with ATP; the sequence is GPSGCGKS.

The protein belongs to the ABC transporter superfamily.

This is an uncharacterized protein from Methanocaldococcus jannaschii (strain ATCC 43067 / DSM 2661 / JAL-1 / JCM 10045 / NBRC 100440) (Methanococcus jannaschii).